We begin with the raw amino-acid sequence, 2489 residues long: Protein YPR117W (2489 aa).

2 consecutive transmembrane segments (helical) span residues 19-39 (FMLF…WILM) and 128-148 (VLSI…LALT). N-linked (GlcNAc...) asparagine glycosylation is found at N191, N210, N311, N452, N468, N605, N638, N663, N698, N789, N835, N981, N1255, N1404, and N1476. A coiled-coil region spans residues 1610–1676 (LTQEKLATER…RLHTVNTILS (67 aa)). Residues 1685 to 1704 (PGGNTDGDSSSSLSDTDVNL) form a disordered region. The segment covering 1690–1704 (DGDSSSSLSDTDVNL) has biased composition (low complexity). Residues N1978 and N2189 are each glycosylated (N-linked (GlcNAc...) asparagine). Residues S2254 and S2278 each carry the phosphoserine modification. N2279 carries N-linked (GlcNAc...) asparagine glycosylation. A compositionally biased stretch (polar residues) spans 2451-2471 (SSTHSSDIRSINSDETYNEND). The disordered stretch occupies residues 2451-2489 (SSTHSSDIRSINSDETYNENDGNGVKPFYPVTSEFSKNK).

The protein localises to the cell membrane. Its subcellular location is the endoplasmic reticulum membrane. It localises to the mitochondrion membrane. Tube-forming lipid transport protein which may bind to phosphatidylinositols and may affect phosphatidylinositol-4,5-bisphosphate (PtdIns-4,5-P2) distribution. The sequence is that of Protein YPR117W from Saccharomyces cerevisiae (strain ATCC 204508 / S288c) (Baker's yeast).